The primary structure comprises 684 residues: Amino-acid acetyltransferase, mitochondrial (684 aa).

The interval 414 to 439 (PQDATNSASEPRDPSQLSTVATRRKR) is disordered. The span at 415–434 (QDATNSASEPRDPSQLSTVA) shows a compositional bias: polar residues. Positions 505-674 (GKSRMTLNDP…YEGVCRGIEP (170 aa)) constitute an N-acetyltransferase domain.

The protein belongs to the acetyltransferase family.

Its subcellular location is the mitochondrion. It catalyses the reaction L-glutamate + acetyl-CoA = N-acetyl-L-glutamate + CoA + H(+). The protein operates within amino-acid biosynthesis; L-arginine biosynthesis; N(2)-acetyl-L-ornithine from L-glutamate: step 1/4. In terms of biological role, N-acetylglutamate synthase involved in arginine biosynthesis. The sequence is that of Amino-acid acetyltransferase, mitochondrial (ARG2) from Ajellomyces capsulatus (strain NAm1 / WU24) (Darling's disease fungus).